A 311-amino-acid chain; its full sequence is Protoheme IX farnesyltransferase (311 aa).

The next 8 membrane-spanning stretches (helical) occupy residues 19–39 (VLAY…VATI), 55–75 (ILAT…LNCV), 101–121 (NAFV…WWQA), 123–143 (LLSG…YTLG), 169–189 (AVTG…FFWT), 221–241 (VTKQ…ALVP), 242–262 (ATGV…LLMA), and 290–310 (VVFC…GSFF).

It belongs to the UbiA prenyltransferase family. Protoheme IX farnesyltransferase subfamily.

The protein resides in the cell membrane. It carries out the reaction heme b + (2E,6E)-farnesyl diphosphate + H2O = Fe(II)-heme o + diphosphate. It participates in porphyrin-containing compound metabolism; heme O biosynthesis; heme O from protoheme: step 1/1. In terms of biological role, converts heme B (protoheme IX) to heme O by substitution of the vinyl group on carbon 2 of heme B porphyrin ring with a hydroxyethyl farnesyl side group. The sequence is that of Protoheme IX farnesyltransferase from Nocardia farcinica (strain IFM 10152).